A 154-amino-acid chain; its full sequence is Ribonuclease P protein component (154 aa).

The protein belongs to the RnpA family. As to quaternary structure, consists of a catalytic RNA component (M1 or rnpB) and a protein subunit.

The enzyme catalyses Endonucleolytic cleavage of RNA, removing 5'-extranucleotides from tRNA precursor.. RNaseP catalyzes the removal of the 5'-leader sequence from pre-tRNA to produce the mature 5'-terminus. It can also cleave other RNA substrates such as 4.5S RNA. The protein component plays an auxiliary but essential role in vivo by binding to the 5'-leader sequence and broadening the substrate specificity of the ribozyme. In Chlorobaculum tepidum (strain ATCC 49652 / DSM 12025 / NBRC 103806 / TLS) (Chlorobium tepidum), this protein is Ribonuclease P protein component.